A 208-amino-acid polypeptide reads, in one-letter code: Ribosomal RNA large subunit methyltransferase E (208 aa).

S-adenosyl-L-methionine contacts are provided by glycine 63, tryptophan 65, aspartate 83, aspartate 99, and aspartate 124. The active-site Proton acceptor is the lysine 164.

The protein belongs to the class I-like SAM-binding methyltransferase superfamily. RNA methyltransferase RlmE family.

Its subcellular location is the cytoplasm. The catalysed reaction is uridine(2552) in 23S rRNA + S-adenosyl-L-methionine = 2'-O-methyluridine(2552) in 23S rRNA + S-adenosyl-L-homocysteine + H(+). Functionally, specifically methylates the uridine in position 2552 of 23S rRNA at the 2'-O position of the ribose in the fully assembled 50S ribosomal subunit. This Salmonella choleraesuis (strain SC-B67) protein is Ribosomal RNA large subunit methyltransferase E.